The chain runs to 215 residues: Large ribosomal subunit protein bL25 (215 aa).

Composition is skewed to polar residues over residues 1 to 19 (MAKSTVNKLSVSVRTNTGK) and 206 to 215 (ENKTAATESE). 2 disordered regions span residues 1–29 (MAKSTVNKLSVSVRTNTGKGASRRARRDG) and 190–215 (AKYAGEAHEAPEVGTAENKTAATESE).

This sequence belongs to the bacterial ribosomal protein bL25 family. CTC subfamily. In terms of assembly, part of the 50S ribosomal subunit; part of the 5S rRNA/L5/L18/L25 subcomplex. Contacts the 5S rRNA. Binds to the 5S rRNA independently of L5 and L18.

Functionally, this is one of the proteins that binds to the 5S RNA in the ribosome where it forms part of the central protuberance. The sequence is that of Large ribosomal subunit protein bL25 from Mycobacterium leprae (strain TN).